The primary structure comprises 475 residues: Exodeoxyribonuclease 7 large subunit (475 aa).

This sequence belongs to the XseA family. As to quaternary structure, heterooligomer composed of large and small subunits.

The protein localises to the cytoplasm. It catalyses the reaction Exonucleolytic cleavage in either 5'- to 3'- or 3'- to 5'-direction to yield nucleoside 5'-phosphates.. Functionally, bidirectionally degrades single-stranded DNA into large acid-insoluble oligonucleotides, which are then degraded further into small acid-soluble oligonucleotides. This Bartonella henselae (strain ATCC 49882 / DSM 28221 / CCUG 30454 / Houston 1) (Rochalimaea henselae) protein is Exodeoxyribonuclease 7 large subunit.